A 209-amino-acid polypeptide reads, in one-letter code: MTGRFIVLDGIDGCGKSTQIRHLAQWLPASGLMPSTAQLICTREPGGTPLGQSIRELLLHTEADQVPSVTAELLLYAADRAQHVDTVIRPALLRGDWVLSDRFAGSTLAYQGYGRGLDRQLITRLESIATTGLEPDLTAWLMVPVEVSLQRRHGEKEDRIEAEGRAFLRRVADGFAVLAEQRNWSQIDAQQSVSKLSQVLEQTLRETLQ.

10–17 provides a ligand contact to ATP; sequence GIDGCGKS.

Belongs to the thymidylate kinase family.

It carries out the reaction dTMP + ATP = dTDP + ADP. In terms of biological role, phosphorylation of dTMP to form dTDP in both de novo and salvage pathways of dTTP synthesis. This chain is Thymidylate kinase, found in Synechococcus sp. (strain CC9902).